The chain runs to 124 residues: Glycine cleavage system H protein (124 aa).

The Lipoyl-binding domain occupies 22-104 (KAKVGITDFA…YENGYLFIIE (83 aa)). Lys63 is subject to N6-lipoyllysine.

Belongs to the GcvH family. The glycine cleavage system is composed of four proteins: P, T, L and H. (R)-lipoate serves as cofactor.

Its function is as follows. The glycine cleavage system catalyzes the degradation of glycine. The H protein shuttles the methylamine group of glycine from the P protein to the T protein. This chain is Glycine cleavage system H protein, found in Endomicrobium trichonymphae.